The sequence spans 896 residues: UPF0182 protein GM21_2279 (896 aa).

Transmembrane regions (helical) follow at residues 6–26, 46–66, 99–119, 158–180, 201–221, 245–265, and 271–291; these read MTFILVAIAVIFPFIGYLLSF, VYAQTGAGLIFGLLLFAFLQL, LVRPVGILISLVLAFLAGNWG, LLKSFAGFMVLAASVLSAAAYYV, LAVLVGLFGLVVAAGFYLESF, TLRILTFLTPVAGVVLALGIW, and LALGPPVVIVALYLVGVRVYP.

The protein belongs to the UPF0182 family.

It is found in the cell membrane. This chain is UPF0182 protein GM21_2279, found in Geobacter sp. (strain M21).